A 37-amino-acid chain; its full sequence is Large ribosomal subunit protein bL36c (37 aa).

Belongs to the bacterial ribosomal protein bL36 family.

The protein localises to the plastid. In Cuscuta reflexa (Southern Asian dodder), this protein is Large ribosomal subunit protein bL36c.